Consider the following 150-residue polypeptide: Large ribosomal subunit protein bL9 (150 aa).

The protein belongs to the bacterial ribosomal protein bL9 family.

In terms of biological role, binds to the 23S rRNA. The polypeptide is Large ribosomal subunit protein bL9 (Limosilactobacillus fermentum (strain NBRC 3956 / LMG 18251) (Lactobacillus fermentum)).